A 348-amino-acid polypeptide reads, in one-letter code: Ferrochelatase (348 aa).

Positions 218 and 299 each coordinate Fe cation.

Belongs to the ferrochelatase family.

It localises to the cytoplasm. The enzyme catalyses heme b + 2 H(+) = protoporphyrin IX + Fe(2+). The protein operates within porphyrin-containing compound metabolism; protoheme biosynthesis; protoheme from protoporphyrin-IX: step 1/1. Catalyzes the ferrous insertion into protoporphyrin IX. In Methylocella silvestris (strain DSM 15510 / CIP 108128 / LMG 27833 / NCIMB 13906 / BL2), this protein is Ferrochelatase.